The chain runs to 156 residues: Toxin Res (156 aa).

Belongs to the MbcT/ParT/Res family. In terms of assembly, homodimer. Forms a complex with cognate antitoxin Xre.

Functionally, toxic component of a type II toxin-antitoxin (TA) system. Expression in E.coli inhibits cell growth; bacteriostasis is neutralized by expression of cognate antitoxin Xre. Expression in E.coli leads to almost complete depletion of intracellular NAD(+): NAD(+) levels are partially restored when coexpressed with antitoxin Xre. The protein is Toxin Res of Photorhabdus laumondii subsp. laumondii (strain DSM 15139 / CIP 105565 / TT01) (Photorhabdus luminescens subsp. laumondii).